Consider the following 120-residue polypeptide: MFSLQGYEYFLGFLLISGAVPILALTTNKLIAPKSKAGERQLTYESGMEPIGGAWIQFNIRYYMFALVFVIFDVETVFLYPWAVAFHKLGLLAFIEALVFITILVVALAYAWRKGALEWS.

The next 3 helical transmembrane spans lie at 6 to 26 (GYEYFLGFLLISGAVPILALT), 64 to 84 (MFALVFVIFDVETVFLYPWAV), and 89 to 109 (LGLLAFIEALVFITILVVALA).

It belongs to the complex I subunit 3 family. NDH-1 can be composed of about 15 different subunits; different subcomplexes with different compositions have been identified which probably have different functions.

It is found in the cellular thylakoid membrane. The catalysed reaction is a plastoquinone + NADH + (n+1) H(+)(in) = a plastoquinol + NAD(+) + n H(+)(out). It carries out the reaction a plastoquinone + NADPH + (n+1) H(+)(in) = a plastoquinol + NADP(+) + n H(+)(out). Its function is as follows. NDH-1 shuttles electrons from an unknown electron donor, via FMN and iron-sulfur (Fe-S) centers, to quinones in the respiratory and/or the photosynthetic chain. The immediate electron acceptor for the enzyme in this species is believed to be plastoquinone. Couples the redox reaction to proton translocation, and thus conserves the redox energy in a proton gradient. Cyanobacterial NDH-1 also plays a role in inorganic carbon-concentration. This is NAD(P)H-quinone oxidoreductase subunit 3 from Prochlorococcus marinus (strain NATL1A).